The primary structure comprises 108 residues: ADM5 (108 aa).

The N-terminal stretch at 1–18 is a signal peptide; that stretch reads MTAHILLLWLFASSILGD. Positions 19–25 are excised as a propeptide; the sequence is PDSAGRL. Residues Cys38 and Cys43 are joined by a disulfide bond. The tract at residues 61-108 is disordered; the sequence is KELSGKAGRKPQDPYSYGRRRRRRRRRREARLLRRLQDPSLRRAQLAG. Tyr77 carries the tyrosine amide modification. Residues 78 to 89 are compositionally biased toward basic residues; it reads GRRRRRRRRRRE. Positions 89–108 are excised as a propeptide; the sequence is EARLLRRLQDPSLRRAQLAG. A compositionally biased stretch (basic and acidic residues) spans 90-101; that stretch reads ARLLRRLQDPSL.

It belongs to the adrenomedullin family. In terms of tissue distribution, expressed abundantly in the spleen and thymus. Also expressed in adrenal and pituitary. Not expressed in brain, heart, kidney, liver and stomach.

It localises to the secreted. In terms of biological role, seems to have a peripheral vasodepressor effect and a central vasopressor effect. In Sus scrofa (Pig), this protein is ADM5 (ADM5).